A 188-amino-acid polypeptide reads, in one-letter code: UPF0200 protein M164_1169 (188 aa).

15–22 lines the ATP pocket; sequence GMPGSGKS.

The protein belongs to the UPF0200 family.

The polypeptide is UPF0200 protein M164_1169 (Saccharolobus islandicus (strain M.16.4 / Kamchatka #3) (Sulfolobus islandicus)).